Reading from the N-terminus, the 253-residue chain is Probable transcriptional regulatory protein TM_0466 (253 aa).

It belongs to the TACO1 family.

The protein resides in the cytoplasm. The polypeptide is Probable transcriptional regulatory protein TM_0466 (Thermotoga maritima (strain ATCC 43589 / DSM 3109 / JCM 10099 / NBRC 100826 / MSB8)).